The sequence spans 455 residues: uncharacterized protein (455 aa).

The span at 1–20 shows a compositional bias: low complexity; the sequence is MGCCLSKKPSPSLPSSVKPS. Disordered stretches follow at residues 1–234 and 258–304; these read MGCC…IPAT and RIAA…QNTK. 5 stretches are compositionally biased toward basic and acidic residues: residues 35 to 46, 61 to 75, 129 to 143, 156 to 166, and 173 to 186; these read EEAKPKSEKLNQ, SHEE…DKDS, RSFD…RGGD, RGVERVHGSPR, and PSRE…RERG. Over residues 213-224 the composition is skewed to polar residues; the sequence is SCGSSVNSSNNR. The span at 260-271 shows a compositional bias: low complexity; that stretch reads AASPRSKSPARA.

This is an uncharacterized protein from Arabidopsis thaliana (Mouse-ear cress).